The sequence spans 185 residues: Ribosome maturation factor RimM (185 aa).

Residues 105–184 form the PRC barrel domain; that stretch reads KDEYYWKDII…IVVVDWEIYK (80 aa).

It belongs to the RimM family. In terms of assembly, binds ribosomal protein uS19.

It localises to the cytoplasm. An accessory protein needed during the final step in the assembly of 30S ribosomal subunit, possibly for assembly of the head region. Essential for efficient processing of 16S rRNA. May be needed both before and after RbfA during the maturation of 16S rRNA. It has affinity for free ribosomal 30S subunits but not for 70S ribosomes. The chain is Ribosome maturation factor RimM from Blochmanniella floridana.